A 413-amino-acid chain; its full sequence is Multifunctional CCA protein (413 aa).

Positions 8 and 11 each coordinate ATP. Positions 8 and 11 each coordinate CTP. Asp-21 and Asp-23 together coordinate Mg(2+). The ATP site is built by Arg-91, Arg-137, and Arg-140. CTP-binding residues include Arg-91, Arg-137, and Arg-140. An HD domain is found at 228-329; the sequence is TGIHTLMVLA…LKVFDKADAW (102 aa).

This sequence belongs to the tRNA nucleotidyltransferase/poly(A) polymerase family. Bacterial CCA-adding enzyme type 1 subfamily. Monomer. Can also form homodimers and oligomers. The cofactor is Mg(2+). Ni(2+) serves as cofactor.

The enzyme catalyses a tRNA precursor + 2 CTP + ATP = a tRNA with a 3' CCA end + 3 diphosphate. It catalyses the reaction a tRNA with a 3' CCA end + 2 CTP + ATP = a tRNA with a 3' CCACCA end + 3 diphosphate. Its function is as follows. Catalyzes the addition and repair of the essential 3'-terminal CCA sequence in tRNAs without using a nucleic acid template. Adds these three nucleotides in the order of C, C, and A to the tRNA nucleotide-73, using CTP and ATP as substrates and producing inorganic pyrophosphate. tRNA 3'-terminal CCA addition is required both for tRNA processing and repair. Also involved in tRNA surveillance by mediating tandem CCA addition to generate a CCACCA at the 3' terminus of unstable tRNAs. While stable tRNAs receive only 3'-terminal CCA, unstable tRNAs are marked with CCACCA and rapidly degraded. This chain is Multifunctional CCA protein, found in Aeromonas salmonicida (strain A449).